Reading from the N-terminus, the 304-residue chain is HTH-type transcriptional regulator TtuA (304 aa).

Residues 1-58 (MELEQLKCFVAAAEELHFGRAAQKMGILPASLGRHLRLLEESLGTRLMSRTTRSVALT) form the HTH lysR-type domain. The H-T-H motif DNA-binding region spans 18-37 (FGRAAQKMGILPASLGRHLR).

Belongs to the LysR transcriptional regulatory family.

In terms of biological role, transcriptional regulator of the ttuABCDE tartrate utilization operon. The chain is HTH-type transcriptional regulator TtuA (ttuA) from Agrobacterium vitis (Rhizobium vitis).